The following is a 321-amino-acid chain: Tetraacyldisaccharide 4'-kinase (321 aa).

54-61 (SVGGTGKT) contacts ATP.

It belongs to the LpxK family.

The enzyme catalyses a lipid A disaccharide + ATP = a lipid IVA + ADP + H(+). It participates in glycolipid biosynthesis; lipid IV(A) biosynthesis; lipid IV(A) from (3R)-3-hydroxytetradecanoyl-[acyl-carrier-protein] and UDP-N-acetyl-alpha-D-glucosamine: step 6/6. Its function is as follows. Transfers the gamma-phosphate of ATP to the 4'-position of a tetraacyldisaccharide 1-phosphate intermediate (termed DS-1-P) to form tetraacyldisaccharide 1,4'-bis-phosphate (lipid IVA). The protein is Tetraacyldisaccharide 4'-kinase of Rickettsia bellii (strain OSU 85-389).